Here is a 344-residue protein sequence, read N- to C-terminus: Lysophosphatidic acid receptor 6 (344 aa).

Over 1-19 the chain is Extracellular; it reads MVSVNSSHCFYNDSFKYTL. Asn-5 is a glycosylation site (N-linked (GlcNAc...) asparagine). Residues 20 to 46 traverse the membrane as a helical segment; that stretch reads YGCMFSMVFVLGLISNCVAIYIFICVL. Residues 47–55 lie on the Cytoplasmic side of the membrane; that stretch reads KVRNETTTY. Residues 56–79 form a helical membrane-spanning segment; the sequence is MINLAMSDLLFVFTLPFRIFYFTT. Topologically, residues 80–92 are extracellular; that stretch reads RNWPFGDLLCKIS. The cysteines at positions 89 and 168 are disulfide-linked. Residues 93-112 form a helical membrane-spanning segment; the sequence is VMLFYTNMYGSILFLTCISV. The Cytoplasmic segment spans residues 113–133; it reads DRFLAIVYPFKSKTLRTKRNA. Residues 134–154 form a helical membrane-spanning segment; it reads KIVCTGVWLTVIGGSAPAVFV. The Extracellular segment spans residues 155–181; sequence QSTHSQGNNASEACFENFPEATWKTYL. Residues 182-209 traverse the membrane as a helical segment; the sequence is SRIVIFIEIVGFFIPLILNVTCSSMVLK. At 210–227 the chain is on the cytoplasmic side; that stretch reads TLTKPVTLSRSKINKTKV. The helical transmembrane segment at 228 to 253 threads the bilayer; the sequence is LKMIFVHLIIFCFCFVPYNINLILYS. The Extracellular segment spans residues 254 to 272; that stretch reads LVRTQTFVNCSVVAAVRTM. The chain crosses the membrane as a helical span at residues 273-292; the sequence is YPITLCIAVSNCCFDPIVYY. Cys-284 carries the S-palmitoyl cysteine lipid modification. The Cytoplasmic portion of the chain corresponds to 293–344; sequence FTSDTIQNSIKMKNWSVRRSDFRFSEVHGAENFIQHNLQTLKSKIFDNESAA.

The protein belongs to the G-protein coupled receptor 1 family. As to expression, expressed ubiquitously, including in skin and hair follicle cells. Detected in both Henle's and Huxley's layers of the inner root sheath of the hair follicle and in suprabasal layers of the epidermis (at protein level). Expressed at low levels in peripheral blood leukocytes.

The protein localises to the cell membrane. Binds to oleoyl-L-alpha-lysophosphatidic acid (LPA). Intracellular cAMP is involved in the receptor activation. Important for the maintenance of hair growth and texture. The polypeptide is Lysophosphatidic acid receptor 6 (LPAR6) (Homo sapiens (Human)).